The sequence spans 212 residues: Protein-L-isoaspartate O-methyltransferase (212 aa).

The active site involves Ser-62.

This sequence belongs to the methyltransferase superfamily. L-isoaspartyl/D-aspartyl protein methyltransferase family.

The protein localises to the cytoplasm. It catalyses the reaction [protein]-L-isoaspartate + S-adenosyl-L-methionine = [protein]-L-isoaspartate alpha-methyl ester + S-adenosyl-L-homocysteine. In terms of biological role, catalyzes the methyl esterification of L-isoaspartyl residues in peptides and proteins that result from spontaneous decomposition of normal L-aspartyl and L-asparaginyl residues. It plays a role in the repair and/or degradation of damaged proteins. The polypeptide is Protein-L-isoaspartate O-methyltransferase (Pseudoalteromonas translucida (strain TAC 125)).